Here is a 192-residue protein sequence, read N- to C-terminus: SPbeta prophage-derived uncharacterized protein YokK (192 aa).

This is SPbeta prophage-derived uncharacterized protein YokK (yokK) from Bacillus subtilis (strain 168).